We begin with the raw amino-acid sequence, 308 residues long: Elongation factor Ts (308 aa).

The tract at residues 80-83 is involved in Mg(2+) ion dislocation from EF-Tu; that stretch reads TDFV.

The protein belongs to the EF-Ts family.

The protein resides in the cytoplasm. In terms of biological role, associates with the EF-Tu.GDP complex and induces the exchange of GDP to GTP. It remains bound to the aminoacyl-tRNA.EF-Tu.GTP complex up to the GTP hydrolysis stage on the ribosome. This Rhizobium leguminosarum bv. trifolii (strain WSM2304) protein is Elongation factor Ts.